We begin with the raw amino-acid sequence, 499 residues long: Endoglucanase (499 aa).

An N-terminal signal peptide occupies residues 1–29; sequence MKRSISIFITCLLITLLTMGGMLASPASA. Substrate contacts are provided by residues histidine 65, 69-70, tyrosine 96, and histidine 131; that span reads WY. Glutamate 169 functions as the Proton donor in the catalytic mechanism. Position 231 (tyrosine 231) interacts with substrate. Glutamate 257 (nucleophile) is an active-site residue. Substrate is bound by residues 263-264, tryptophan 291, and 296-298; these read AS and KQE. The CBM3 domain maps to 350-499; the sequence is QENGISVQYR…GKLIWGTEPN (150 aa).

Belongs to the glycosyl hydrolase 5 (cellulase A) family.

It carries out the reaction Endohydrolysis of (1-&gt;4)-beta-D-glucosidic linkages in cellulose, lichenin and cereal beta-D-glucans.. This is Endoglucanase (bglC) from Bacillus subtilis.